A 145-amino-acid polypeptide reads, in one-letter code: D-aminoacyl-tRNA deacylase (145 aa).

The Gly-cisPro motif, important for rejection of L-amino acids motif lies at 137 to 138; the sequence is GP.

It belongs to the DTD family. Homodimer.

The protein localises to the cytoplasm. The catalysed reaction is glycyl-tRNA(Ala) + H2O = tRNA(Ala) + glycine + H(+). The enzyme catalyses a D-aminoacyl-tRNA + H2O = a tRNA + a D-alpha-amino acid + H(+). Its function is as follows. An aminoacyl-tRNA editing enzyme that deacylates mischarged D-aminoacyl-tRNAs. Also deacylates mischarged glycyl-tRNA(Ala), protecting cells against glycine mischarging by AlaRS. Acts via tRNA-based rather than protein-based catalysis; rejects L-amino acids rather than detecting D-amino acids in the active site. By recycling D-aminoacyl-tRNA to D-amino acids and free tRNA molecules, this enzyme counteracts the toxicity associated with the formation of D-aminoacyl-tRNA entities in vivo and helps enforce protein L-homochirality. The protein is D-aminoacyl-tRNA deacylase of Photorhabdus laumondii subsp. laumondii (strain DSM 15139 / CIP 105565 / TT01) (Photorhabdus luminescens subsp. laumondii).